The chain runs to 341 residues: 5-formaminoimidazole-4-carboxamide-1-(beta)-D-ribofuranosyl 5'-monophosphate synthetase (341 aa).

5-amino-1-(5-phospho-beta-D-ribosyl)imidazole-4-carboxamide-binding residues include His-10 and Thr-77. An ATP-grasp domain is found at 106–317 (DREMKEKLMR…YYNLLFNETM (212 aa)). ATP contacts are provided by residues 132–188 (EKLS…VLAY) and Glu-210. A 5-amino-1-(5-phospho-beta-D-ribosyl)imidazole-4-carboxamide-binding site is contributed by Asn-238. Mg(2+) is bound by residues Glu-277 and Glu-290.

The protein belongs to the phosphohexose mutase family. Mg(2+) serves as cofactor. Mn(2+) is required as a cofactor.

The catalysed reaction is 5-amino-1-(5-phospho-beta-D-ribosyl)imidazole-4-carboxamide + formate + ATP = 5-formamido-1-(5-phospho-D-ribosyl)imidazole-4-carboxamide + ADP + phosphate. It participates in purine metabolism; IMP biosynthesis via de novo pathway; 5-formamido-1-(5-phospho-D-ribosyl)imidazole-4-carboxamide from 5-amino-1-(5-phospho-D-ribosyl)imidazole-4-carboxamide (formate route): step 1/1. Catalyzes the ATP- and formate-dependent formylation of 5-aminoimidazole-4-carboxamide-1-beta-d-ribofuranosyl 5'-monophosphate (AICAR) to 5-formaminoimidazole-4-carboxamide-1-beta-d-ribofuranosyl 5'-monophosphate (FAICAR) in the absence of folates. This chain is 5-formaminoimidazole-4-carboxamide-1-(beta)-D-ribofuranosyl 5'-monophosphate synthetase, found in Nitrosopumilus maritimus (strain SCM1).